The sequence spans 100 residues: Large ribosomal subunit protein uL23 (100 aa).

Belongs to the universal ribosomal protein uL23 family. Part of the 50S ribosomal subunit. Contacts protein L29, and trigger factor when it is bound to the ribosome.

Its function is as follows. One of the early assembly proteins it binds 23S rRNA. One of the proteins that surrounds the polypeptide exit tunnel on the outside of the ribosome. Forms the main docking site for trigger factor binding to the ribosome. The chain is Large ribosomal subunit protein uL23 from Mycolicibacterium gilvum (strain PYR-GCK) (Mycobacterium gilvum (strain PYR-GCK)).